The sequence spans 91 residues: Putative antitoxin YutD (91 aa).

A disulfide bridge connects residues Cys77 and Cys81.

In terms of assembly, homodimer, probably forms a complex with cognate toxin YutE.

In terms of biological role, probable antitoxin component of a putative type VII toxin-antitoxin (TA) system. Probably neutralizes cognate toxin YutE. The polypeptide is Putative antitoxin YutD (yutD) (Bacillus subtilis (strain 168)).